We begin with the raw amino-acid sequence, 967 residues long: Protein moonraker (967 aa).

The interval S178–H201 is disordered. Over residues H179 to P188 the composition is skewed to polar residues. 2 positions are modified to phosphoserine: S287 and S409. 2 disordered regions span residues A401 to S431 and K490 to T601. Positions Q525–L543 are enriched in polar residues. Over residues W557–S568 the composition is skewed to pro residues. The stretch at A616–D642 forms a coiled coil. S700 and S826 each carry phosphoserine. Residues R849–P872 are disordered. Residues G885 to T967 are necessary and sufficient for CEP20-binding.

As to quaternary structure, interacts with CEP63. Interacts with WDR62. Forms a complex with OFD1 and CEP20/FOR20. Interacts with PCM1.

The protein resides in the cytoplasm. The protein localises to the cytoskeleton. It is found in the microtubule organizing center. Its subcellular location is the centrosome. It localises to the centriole. The protein resides in the centriolar satellite. Its function is as follows. Involved in centriole duplication. Positively regulates CEP63 centrosomal localization. Required for WDR62 centrosomal localization and promotes the centrosomal localization of CDK2. May play a role in cilium assembly. This is Protein moonraker (KIAA0753) from Homo sapiens (Human).